The following is a 1092-amino-acid chain: Neural cell adhesion molecule 1-B (1092 aa).

Positions 1–19 (MLHIKDLIWTLYFIGAAVA) are cleaved as a signal peptide. Ig-like C2-type domains lie at 20–108 (LEVN…GTVN), 113–202 (QKLT…KDIQ), 208–295 (PPLI…EAIV), 303–397 (PKMT…FEVQ), and 400–489 (PKIR…FILV). The Extracellular portion of the chain corresponds to 20-705 (LEVNIVPDQG…ATSASTGLGT (686 aa)). 2 disulfide bridges follow: C41/C93 and C136/C186. N82 is a glycosylation site (N-linked (GlcNAc...) asparagine). Heparin contacts are provided by residues 149 to 153 (RHKGK) and 158 to 162 (KKDVR). An N-linked (GlcNAc...) asparagine glycan is attached at N219. A disulfide bridge connects residues C232 and C282. N-linked (GlcNAc...) asparagine glycans are attached at residues N310, N341, N417, N443, and N472. A disulfide bond links C323 and C379. C420 and C473 are disulfide-bonded. 2 consecutive Fibronectin type-III domains span residues 493 to 592 (TPSS…TQPV) and 595 to 691 (EPSA…TAKP). The helical transmembrane segment at 706 to 723 (GAIVGILIVTFVLLLVVV) threads the bilayer. Over 724–1092 (DVTCFFLNKC…TQRNVNESKA (369 aa)) the chain is Cytoplasmic. The segment covering 754–784 (KDIEEGKAAFSKDESKEPIVEVRTEEERTPN) has biased composition (basic and acidic residues). 2 disordered regions span residues 754–1005 (KDIE…GGTF) and 1024–1092 (TPAA…ESKA). 2 stretches are compositionally biased toward low complexity: residues 820–832 (TTVTTNSDTITET) and 839–851 (SPTSETTTLTSST). Polar residues predominate over residues 860 to 871 (DSNTVQSVQATP). Residues 917 to 929 (PSAATSAAEPPTA) show a composition bias toward low complexity. Residues 968 to 978 (AQPSTVKSPTE) show a composition bias toward polar residues. Positions 1050 to 1068 (AKTEKTQVEENSKPEETDV) are enriched in basic and acidic residues. Polar residues predominate over residues 1080–1092 (NEATQRNVNESKA).

Post-translationally, polysialylated by ST8SIA2 and ST8SIA4. Polysialylation modulates cell interactions by confering both attractive and repulsive properties that are highly regulated by ST8SIA2 and ST8SIA4. Polysialylation is formed on a-2,3-linked sialic acid of core glycans.

It is found in the cell membrane. Functionally, this protein is a cell adhesion molecule involved in neuron-neuron adhesion, neurite fasciculation, outgrowth of neurites, etc. This Xenopus laevis (African clawed frog) protein is Neural cell adhesion molecule 1-B.